The sequence spans 922 residues: Isoleucine--tRNA ligase (922 aa).

The short motif at 57-67 (PYANGDIHLGH) is the 'HIGH' region element. Glu-553 contributes to the L-isoleucyl-5'-AMP binding site. The 'KMSKS' region signature appears at 594 to 598 (KMSKS). Lys-597 serves as a coordination point for ATP. Cys-892, Cys-895, Cys-912, and Cys-915 together coordinate Zn(2+).

Belongs to the class-I aminoacyl-tRNA synthetase family. IleS type 1 subfamily. Monomer. Requires Zn(2+) as cofactor.

It is found in the cytoplasm. The enzyme catalyses tRNA(Ile) + L-isoleucine + ATP = L-isoleucyl-tRNA(Ile) + AMP + diphosphate. Catalyzes the attachment of isoleucine to tRNA(Ile). As IleRS can inadvertently accommodate and process structurally similar amino acids such as valine, to avoid such errors it has two additional distinct tRNA(Ile)-dependent editing activities. One activity is designated as 'pretransfer' editing and involves the hydrolysis of activated Val-AMP. The other activity is designated 'posttransfer' editing and involves deacylation of mischarged Val-tRNA(Ile). The protein is Isoleucine--tRNA ligase of Desulfitobacterium hafniense (strain DSM 10664 / DCB-2).